The following is a 377-amino-acid chain: DNA dC-&gt;dU-editing enzyme APOBEC-3G (377 aa).

The segment at 1 to 60 is essential for cytoplasmic localization; the sequence is MNPQIRNMVEQMEPDIFVYYFNNRPILSGRNTVWLCYEVKTKDPSGPPLDANIFQGKLYP. CMP/dCMP-type deaminase domains lie at 29 to 138 and 214 to 327; these read GRNT…LRIL and GQRE…LRTL. Thr32 carries the post-translational modification Phosphothreonine; by PKA. The Zn(2+) site is built by His65, Cys97, and Cys100. The necessary for homooligomerization stretch occupies residues 209 to 335; that stretch reads KPWVSGQRET…TLHRDGAKIA (127 aa). Residues 213–215 are interaction with DNA; that stretch reads SGQ. Residue Thr218 is modified to Phosphothreonine; by PKA and CAMK2. His257 is a Zn(2+) binding site. Glu259 functions as the Proton donor in the catalytic mechanism. Residues Cys287 and Cys290 each coordinate Zn(2+). Positions 312-319 are interaction with DNA; that stretch reads RIYDDQGR.

Belongs to the cytidine and deoxycytidylate deaminase family. In terms of assembly, homodimer. Homooligomer. Can bind RNA to form ribonucleoprotein complexes of high-molecular-mass (HMM) or low-molecular-mass (LMM). HMM is inactive and heterogeneous in protein composition because of binding nonselectively to cellular RNAs, which in turn are associated with variety of cellular proteins. The LMM form which is enzymatically active has few or no RNAs associated. Its ability to form homooligomer is distinct from its ability to assemble into HMM. Interacts with APOBEC3B, APOBEC3F, MOV10, AGO2, EIF4E, EIF4ENIF1, DCP2 and DDX6 in an RNA-dependent manner. Interacts with AGO1, AGO3 and PKA/PRKACA. The cofactor is Zn(2+).

Its subcellular location is the cytoplasm. The protein localises to the nucleus. It is found in the P-body. The catalysed reaction is a 2'-deoxycytidine in single-stranded DNA + H2O + H(+) = a 2'-deoxyuridine in single-stranded DNA + NH4(+). DNA deaminase (cytidine deaminase) which acts as an inhibitor of retrovirus replication and retrotransposon mobility via deaminase-dependent and -independent mechanisms. Exhibits antiviral activity against vif-deficient: HIV-1 and simian immunodeficiency viruses (SIVs) and also simian foamy virus (SFV). After the penetration of retroviral nucleocapsids into target cells of infection and the initiation of reverse transcription, it can induce the conversion of cytosine to uracil in the minus-sense single-strand viral DNA, leading to G-to-A hypermutations in the subsequent plus-strand viral DNA. The resultant detrimental levels of mutations in the proviral genome, along with a deamination-independent mechanism that works prior to the proviral integration, together exert efficient antiretroviral effects in infected target cells. Selectively targets single-stranded DNA and does not deaminate double-stranded DNA or single- or double-stranded RNA. May inhibit the mobility of LTR retrotransposons. The sequence is that of DNA dC-&gt;dU-editing enzyme APOBEC-3G (APOBEC3G) from Chlorocebus aethiops (Green monkey).